Consider the following 348-residue polypeptide: Neuronal growth regulator 1 (348 aa).

The N-terminal stretch at Met1–Ser31 is a signal peptide. Ig-like C2-type domains lie at Val32–Thr128, Pro133–Val215, and Pro219–Asn307. The cysteines at positions 54 and 112 are disulfide-linked. N-linked (GlcNAc...) asparagine glycosylation is found at Asn67 and Asn149. Cystine bridges form between Cys154–Cys197 and Cys239–Cys291. Phosphotyrosine is present on Tyr181. Residues Asn269, Asn280, Asn288, and Asn301 are each glycosylated (N-linked (GlcNAc...) asparagine). A lipid anchor (GPI-anchor amidated glycine) is attached at Gly318. A propeptide spans Ser319–Gln348 (removed in mature form).

Belongs to the immunoglobulin superfamily. IgLON family. In terms of processing, glycosylated. As to expression, highly expressed in brain.

The protein resides in the cell membrane. Functionally, may be involved in cell-adhesion. May function as a trans-neural growth-promoting factor in regenerative axon sprouting in the mammalian brain. This Rattus norvegicus (Rat) protein is Neuronal growth regulator 1 (Negr1).